A 236-amino-acid polypeptide reads, in one-letter code: 2-C-methyl-D-erythritol 4-phosphate cytidylyltransferase (236 aa).

This sequence belongs to the IspD/TarI cytidylyltransferase family. IspD subfamily. As to quaternary structure, homodimer.

The enzyme catalyses 2-C-methyl-D-erythritol 4-phosphate + CTP + H(+) = 4-CDP-2-C-methyl-D-erythritol + diphosphate. It participates in isoprenoid biosynthesis; isopentenyl diphosphate biosynthesis via DXP pathway; isopentenyl diphosphate from 1-deoxy-D-xylulose 5-phosphate: step 2/6. In terms of biological role, catalyzes the formation of 4-diphosphocytidyl-2-C-methyl-D-erythritol from CTP and 2-C-methyl-D-erythritol 4-phosphate (MEP). In Escherichia fergusonii (strain ATCC 35469 / DSM 13698 / CCUG 18766 / IAM 14443 / JCM 21226 / LMG 7866 / NBRC 102419 / NCTC 12128 / CDC 0568-73), this protein is 2-C-methyl-D-erythritol 4-phosphate cytidylyltransferase.